The following is a 312-amino-acid chain: Small ribosomal subunit protein RACK1 (312 aa).

7 WD repeats span residues 9 to 42, 63 to 93, 105 to 135, 148 to 180, 192 to 222, 233 to 262, and 279 to 307; these read GHRGWVTSLACPQQAGSYIKVVSTSRDGTVISWK, GHTGFVSCVSLAHATDYALTASWDRSIRMWD, KHTKDVLAVAFSPDDRLIVSAGRDNVIRVWN, GHEDWVSSICFSPSLEHPIVVSGSWDNTIKVWN, GHSNYVSTVTVSPDGSLCASGGKDGAALLWD, NVESPINQIGFSPNRFWMCVATERSLSVYD, and PSECISIAWSADGNTLYSGHKDNLIRVWS.

The protein belongs to the WD repeat G protein beta family. Ribosomal protein RACK1 subfamily.

This Leishmania major protein is Small ribosomal subunit protein RACK1.